The sequence spans 239 residues: MEFFNILQSACNDVNLDFNDKKYNQLISYKNLIQEWNKKINLTAIVEDDEIIKKHFIDCIKIFKSSPIGEAKSLIDIGTGAGFPGIPIKILKEDIEITLLDSLQKRINFLNIVIGELQLKNIQCLHGRAEDYAQEIQHRQKYDIAVSRAVANLAVLSEFCIPFVEKGGYFIAMKGPSVEEEITAATKSIEILGGKIEDIMKIDIEDTDLKHNLVIIKKLRETGKRYPRKPGIIKKNPLK.

Residues G78, F83, 129 to 130 (AE), and R148 each bind S-adenosyl-L-methionine.

The protein belongs to the methyltransferase superfamily. RNA methyltransferase RsmG family.

It is found in the cytoplasm. Its function is as follows. Specifically methylates the N7 position of a guanine in 16S rRNA. The polypeptide is Ribosomal RNA small subunit methyltransferase G (Clostridium botulinum (strain Kyoto / Type A2)).